A 117-amino-acid polypeptide reads, in one-letter code: Protein GL2-INTERACTING REPRESSOR 2 (117 aa).

The segment at 1–56 is disordered; that stretch reads MSRRNKNGPKLELRLNLSPPPSQASQMSLVRSPNRSNTTSPSSCVSSETNQEENET. Residues 10-15 carry the EAR motif; that stretch reads KLELRL. Low complexity predominate over residues 31-49; the sequence is RSPNRSNTTSPSSCVSSET.

As to quaternary structure, interacts with GL2. Interacts with TPL.

Its subcellular location is the nucleus. Its function is as follows. Acts as a negative regulator of root hair development redundantly with GIR1. GIR1 and GIR2 may function as adapter proteins that associate with GL2 and participate in the control of root hair formation. GIR1 and GIR2 may function as adapter proteins that associate with TPL and participate in the repression of root gene expression. The chain is Protein GL2-INTERACTING REPRESSOR 2 from Arabidopsis thaliana (Mouse-ear cress).